The primary structure comprises 491 residues: Aspartyl/glutamyl-tRNA(Asn/Gln) amidotransferase subunit B (491 aa).

Belongs to the GatB/GatE family. GatB subfamily. Heterotrimer of A, B and C subunits.

The catalysed reaction is L-glutamyl-tRNA(Gln) + L-glutamine + ATP + H2O = L-glutaminyl-tRNA(Gln) + L-glutamate + ADP + phosphate + H(+). It carries out the reaction L-aspartyl-tRNA(Asn) + L-glutamine + ATP + H2O = L-asparaginyl-tRNA(Asn) + L-glutamate + ADP + phosphate + 2 H(+). Functionally, allows the formation of correctly charged Asn-tRNA(Asn) or Gln-tRNA(Gln) through the transamidation of misacylated Asp-tRNA(Asn) or Glu-tRNA(Gln) in organisms which lack either or both of asparaginyl-tRNA or glutaminyl-tRNA synthetases. The reaction takes place in the presence of glutamine and ATP through an activated phospho-Asp-tRNA(Asn) or phospho-Glu-tRNA(Gln). This is Aspartyl/glutamyl-tRNA(Asn/Gln) amidotransferase subunit B from Parasynechococcus marenigrum (strain WH8102).